An 86-amino-acid polypeptide reads, in one-letter code: Putative protein adenylyltransferase MJ1215 (86 aa).

The GSX(10)DXD motif motif lies at 35–49 (GSYARGEQKETSDID). Mg(2+) contacts are provided by Asp47, Asp49, and Asp79.

Belongs to the MntA antitoxin family. As to quaternary structure, probably forms a complex with cognate toxin MJ1216. Requires Mg(2+) as cofactor.

The enzyme catalyses L-tyrosyl-[protein] + ATP = O-(5'-adenylyl)-L-tyrosyl-[protein] + diphosphate. The catalysed reaction is O-(5'-adenylyl)-L-tyrosyl-[protein] + ATP = O-[5'-(adenylyl-(5'-&gt;3')-adenylyl)]-L-tyrosyl-[protein] + diphosphate. Probable antitoxin component of a putative type VII toxin-antitoxin (TA) system. Neutralizes cognate toxic MJ1216 by di-AMPylation. The sequence is that of Putative protein adenylyltransferase MJ1215 from Methanocaldococcus jannaschii (strain ATCC 43067 / DSM 2661 / JAL-1 / JCM 10045 / NBRC 100440) (Methanococcus jannaschii).